Consider the following 475-residue polypeptide: Putative aldehyde dehydrogenase (475 aa).

Residues 146 to 147 (WN) and 223 to 224 (GS) each bind NAD(+). The Proton acceptor role is filled by E245. Residue L246 participates in NAD(+) binding. Residue C279 is the Nucleophile of the active site. Position 379 (E379) interacts with NAD(+).

This sequence belongs to the aldehyde dehydrogenase family.

It carries out the reaction an aldehyde + NAD(+) + H2O = a carboxylate + NADH + 2 H(+). The polypeptide is Putative aldehyde dehydrogenase (Staphylococcus aureus (strain USA300)).